A 485-amino-acid polypeptide reads, in one-letter code: Glycogen synthase (485 aa).

Lys-21 is an ADP-alpha-D-glucose binding site.

The protein belongs to the glycosyltransferase 1 family. Bacterial/plant glycogen synthase subfamily.

It carries out the reaction [(1-&gt;4)-alpha-D-glucosyl](n) + ADP-alpha-D-glucose = [(1-&gt;4)-alpha-D-glucosyl](n+1) + ADP + H(+). The protein operates within glycan biosynthesis; glycogen biosynthesis. Synthesizes alpha-1,4-glucan chains using ADP-glucose. This is Glycogen synthase from Pseudomonas syringae pv. syringae (strain B728a).